Here is a 222-residue protein sequence, read N- to C-terminus: Probable fructose-6-phosphate aldolase (222 aa).

K87 (schiff-base intermediate with substrate) is an active-site residue.

This sequence belongs to the transaldolase family. Type 3A subfamily.

It is found in the cytoplasm. The catalysed reaction is beta-D-fructose 6-phosphate = dihydroxyacetone + D-glyceraldehyde 3-phosphate. Its function is as follows. Catalyzes the reversible formation of fructose 6-phosphate from dihydroxyacetone and D-glyceraldehyde 3-phosphate via an aldolization reaction. This Streptococcus pneumoniae (strain ATCC 700669 / Spain 23F-1) protein is Probable fructose-6-phosphate aldolase.